We begin with the raw amino-acid sequence, 66 residues long: Neurotoxin Cex11 (66 aa).

Positions 1–64 (KEGYPVNIYT…SYPYPEKSCG (64 aa)) constitute an LCN-type CS-alpha/beta domain. Intrachain disulfides connect cysteine 12–cysteine 63, cysteine 16–cysteine 39, cysteine 25–cysteine 44, and cysteine 29–cysteine 46. Cysteine 63 carries the cysteine amide modification. Positions 64–66 (GRK) are excised as a propeptide.

It belongs to the long (4 C-C) scorpion toxin superfamily. Sodium channel inhibitor family. Beta subfamily. Expressed by the venom gland.

It is found in the secreted. In terms of biological role, beta toxins bind voltage-independently at site-4 of sodium channels (Nav) and shift the voltage of activation toward more negative potentials thereby affecting sodium channel activation and promoting spontaneous and repetitive firing. The sequence is that of Neurotoxin Cex11 from Centruroides exilicauda (Bark scorpion).